The sequence spans 443 residues: ATP-dependent protease ATPase subunit HslU (443 aa).

ATP-binding positions include Ile18, 60–65 (GVGKTE), Asp256, Glu321, and Arg393.

This sequence belongs to the ClpX chaperone family. HslU subfamily. A double ring-shaped homohexamer of HslV is capped on each side by a ring-shaped HslU homohexamer. The assembly of the HslU/HslV complex is dependent on binding of ATP.

The protein localises to the cytoplasm. ATPase subunit of a proteasome-like degradation complex; this subunit has chaperone activity. The binding of ATP and its subsequent hydrolysis by HslU are essential for unfolding of protein substrates subsequently hydrolyzed by HslV. HslU recognizes the N-terminal part of its protein substrates and unfolds these before they are guided to HslV for hydrolysis. This Wigglesworthia glossinidia brevipalpis protein is ATP-dependent protease ATPase subunit HslU.